Here is a 256-residue protein sequence, read N- to C-terminus: Protein LIKE COV 1 (256 aa).

The span at 1-10 shows a compositional bias: basic and acidic residues; that stretch reads MANRERDREL. Positions 1-39 are disordered; it reads MANRERDRELLIPVADFGDKDDGSSSKPSSSSSASSSHQ. The Cytoplasmic segment spans residues 1 to 60; it reads MANRERDRELLIPVADFGDKDDGSSSKPSSSSSASSSHQSGHETLSLFIRGWASKKFMTG. A compositionally biased stretch (low complexity) spans 25 to 39; that stretch reads SSKPSSSSSASSSHQ. A helical membrane pass occupies residues 61-81; sequence CVILLPIAVTFYTTWWFIHFV. Residues 82–93 are Extracellular-facing; the sequence is DGFFSPIYALLG. A helical transmembrane segment spans residues 94 to 114; sequence INIFGFGFLTSIAFIFLVGVF. Over 115–256 the chain is Cytoplasmic; it reads MSSWLGASVL…KPLASIGNES (142 aa).

It belongs to the plant COV1 protein family. Expressed at low levels in flowers, stems, roots and leaves.

Its subcellular location is the membrane. The protein is Protein LIKE COV 1 of Arabidopsis thaliana (Mouse-ear cress).